Here is a 1202-residue protein sequence, read N- to C-terminus: DNA-directed RNA polymerase subunit beta (1202 aa).

It belongs to the RNA polymerase beta chain family. As to quaternary structure, the RNAP catalytic core consists of 2 alpha, 1 beta, 1 beta' and 1 omega subunit. When a sigma factor is associated with the core the holoenzyme is formed, which can initiate transcription.

It carries out the reaction RNA(n) + a ribonucleoside 5'-triphosphate = RNA(n+1) + diphosphate. Its function is as follows. DNA-dependent RNA polymerase catalyzes the transcription of DNA into RNA using the four ribonucleoside triphosphates as substrates. This Mycoplasmopsis synoviae (strain 53) (Mycoplasma synoviae) protein is DNA-directed RNA polymerase subunit beta.